The chain runs to 541 residues: MAKEIKYGSEARAALGAGVDKLANTVRVTLGPKGRNVVLDKSYGAPLITNDGVTIAKEVELEDAFENMGAQLVKEVATKTNDVAGDGTTTATVLTQAMVQEGMKNLEAGANPIVLRRGMKKATDKAVEALKDMSQKVKGKEQIAKVAAISAGDEEVGNLVADAMEKVTNDGVITIEESKTMQTELDLVEGMQFDRGYLSAYMCTDMDKMEAVLDDPYILITDKKISNIQDILPLLEKIVQAGARLLIIAEDVEGEALTTLIVNKLRGTFNVVAVKAPGYGDRRKAMLEDIAILTGGQVISSDLGLELKDTTIDMLGRAKSVKVQKENTVIVDGAGDKDAIAGRVSQIRGQIDETTSEFDKEKLQERLAKMAGGVAVIRVGAATETEMKEAKLRMEDALNATRAAVEEGIIAGGGSAYIHASKKVAELVDTLEGDEKTGAKVILKALEAPLYYIAANAGLEGAVIINKVKESAPGTGFNAATEEYVDMVDNGILDPVKVTRSALQNATSVASTLLTTESAVATIKEDTPAMPAGAGAGMGMM.

ATP is bound by residues 29–32 (TLGP), 86–90 (DGTTT), Gly413, 478–480 (NAA), and Asp494.

The protein belongs to the chaperonin (HSP60) family. As to quaternary structure, forms a cylinder of 14 subunits composed of two heptameric rings stacked back-to-back. Interacts with the co-chaperonin GroES.

Its subcellular location is the cytoplasm. It carries out the reaction ATP + H2O + a folded polypeptide = ADP + phosphate + an unfolded polypeptide.. Functionally, together with its co-chaperonin GroES, plays an essential role in assisting protein folding. The GroEL-GroES system forms a nano-cage that allows encapsulation of the non-native substrate proteins and provides a physical environment optimized to promote and accelerate protein folding. The polypeptide is Chaperonin GroEL (Agathobacter rectalis (strain ATCC 33656 / DSM 3377 / JCM 17463 / KCTC 5835 / VPI 0990) (Eubacterium rectale)).